A 543-amino-acid polypeptide reads, in one-letter code: uncharacterized protein (543 aa).

A TRAM domain is found at 1–59; sequence MLKKNDIVEVEIVDLTHEGAGVAKVDGLVFFVENALPSEKILMRVLKVNKKIGFGKVEK. S-adenosyl-L-methionine contacts are provided by Gln-283, Tyr-312, Glu-333, and Asp-381. The Nucleophile role is filled by Cys-408.

This sequence belongs to the class I-like SAM-binding methyltransferase superfamily. RNA M5U methyltransferase family.

This is an uncharacterized protein from Streptococcus pneumoniae serotype 4 (strain ATCC BAA-334 / TIGR4).